We begin with the raw amino-acid sequence, 391 residues long: MDYYDVLGVSKTASPEEIKKAYRKLAVKYHPDKNPGDAEAEKRFKEVSEAYEVLSDAQKRESYDRYGKDGPFAGAGGFGGAGMGNMEDALRTFMGAFGGEFGGGGSFFEGLFGGLGEAFGMRGDPAGARQGASKKVHITLTFEEAARGVEKELLVSGYKTCTTCSGSGAANERGIKCCERCKGSGQIVQSRGFFSMASTCPECGGEGRIITDPCSNCRGQGRVKDKRNVHVQIPAGVDSGMRLKMEGYGDAGQNGAPSGDLYVFIDVEPHPVFERRGDDLILELPIGFVDAALGMKKEIPTLLKEGTCRLTVPEGIQSGTILKVKNQGFPNVHGRGRGDLLVRVSVETPQNLSEEQKELLRKFSSTEKAENFPKKRGFLDKIKGFFSDFTV.

Residues 2-67 enclose the J domain; that stretch reads DYYDVLGVSK…QKRESYDRYG (66 aa). A CR-type zinc finger spans residues 148–226; it reads GVEKELLVSG…CRGQGRVKDK (79 aa). The Zn(2+) site is built by Cys161, Cys164, Cys178, Cys181, Cys200, Cys203, Cys214, and Cys217. CXXCXGXG motif repeat units lie at residues 161–168, 178–185, 200–207, and 214–221; these read CTTCSGSG, CERCKGSG, CPECGGEG, and CSNCRGQG.

Belongs to the DnaJ family. Homodimer. Requires Zn(2+) as cofactor.

The protein resides in the cytoplasm. Participates actively in the response to hyperosmotic and heat shock by preventing the aggregation of stress-denatured proteins and by disaggregating proteins, also in an autonomous, DnaK-independent fashion. Unfolded proteins bind initially to DnaJ; upon interaction with the DnaJ-bound protein, DnaK hydrolyzes its bound ATP, resulting in the formation of a stable complex. GrpE releases ADP from DnaK; ATP binding to DnaK triggers the release of the substrate protein, thus completing the reaction cycle. Several rounds of ATP-dependent interactions between DnaJ, DnaK and GrpE are required for fully efficient folding. Also involved, together with DnaK and GrpE, in the DNA replication of plasmids through activation of initiation proteins. This Chlamydia felis (strain Fe/C-56) (Chlamydophila felis) protein is Chaperone protein DnaJ.